Reading from the N-terminus, the 250-residue chain is 5-oxoprolinase subunit A (250 aa).

Belongs to the LamB/PxpA family. As to quaternary structure, forms a complex composed of PxpA, PxpB and PxpC.

It catalyses the reaction 5-oxo-L-proline + ATP + 2 H2O = L-glutamate + ADP + phosphate + H(+). In terms of biological role, catalyzes the cleavage of 5-oxoproline to form L-glutamate coupled to the hydrolysis of ATP to ADP and inorganic phosphate. This chain is 5-oxoprolinase subunit A, found in Streptomyces coelicolor (strain ATCC BAA-471 / A3(2) / M145).